We begin with the raw amino-acid sequence, 376 residues long: D-alanine--D-alanine ligase B (376 aa).

The ATP-grasp domain maps to 155–361 (KRLMRDAGLP…QTDLMDKLIA (207 aa)). 184 to 239 (AALGTPDLFVKPANLGSSVGVSRARSEEEFAASCALAFRYDRKILVEQALNGAREI) provides a ligand contact to ATP. Mg(2+) contacts are provided by D316, E328, and N330.

This sequence belongs to the D-alanine--D-alanine ligase family. The cofactor is Mg(2+). It depends on Mn(2+) as a cofactor.

It localises to the cytoplasm. The enzyme catalyses 2 D-alanine + ATP = D-alanyl-D-alanine + ADP + phosphate + H(+). It functions in the pathway cell wall biogenesis; peptidoglycan biosynthesis. In terms of biological role, cell wall formation. The chain is D-alanine--D-alanine ligase B from Bradyrhizobium diazoefficiens (strain JCM 10833 / BCRC 13528 / IAM 13628 / NBRC 14792 / USDA 110).